The chain runs to 346 residues: Tetraacyldisaccharide 4'-kinase (346 aa).

ATP is bound at residue 54–61 (TVGGAGKT).

The protein belongs to the LpxK family.

It carries out the reaction a lipid A disaccharide + ATP = a lipid IVA + ADP + H(+). The protein operates within glycolipid biosynthesis; lipid IV(A) biosynthesis; lipid IV(A) from (3R)-3-hydroxytetradecanoyl-[acyl-carrier-protein] and UDP-N-acetyl-alpha-D-glucosamine: step 6/6. Functionally, transfers the gamma-phosphate of ATP to the 4'-position of a tetraacyldisaccharide 1-phosphate intermediate (termed DS-1-P) to form tetraacyldisaccharide 1,4'-bis-phosphate (lipid IVA). The chain is Tetraacyldisaccharide 4'-kinase from Rhizobium etli (strain ATCC 51251 / DSM 11541 / JCM 21823 / NBRC 15573 / CFN 42).